The primary structure comprises 705 residues: 1,4-alpha-glucan branching enzyme GlgB (705 aa).

Catalysis depends on aspartate 309, which acts as the Nucleophile. The active-site Proton donor is the glutamate 360. The interval 654–705 (VQVERAADPRPNEQQRLVAETPAHEGGRSAPADAAESAEQKPDDEQKGGKKA) is disordered. Over residues 691–705 (AEQKPDDEQKGGKKA) the composition is skewed to basic and acidic residues.

It belongs to the glycosyl hydrolase 13 family. GlgB subfamily. In terms of assembly, monomer.

It catalyses the reaction Transfers a segment of a (1-&gt;4)-alpha-D-glucan chain to a primary hydroxy group in a similar glucan chain.. Its pathway is glycan biosynthesis; glycogen biosynthesis. Functionally, catalyzes the formation of the alpha-1,6-glucosidic linkages in glycogen by scission of a 1,4-alpha-linked oligosaccharide from growing alpha-1,4-glucan chains and the subsequent attachment of the oligosaccharide to the alpha-1,6 position. This chain is 1,4-alpha-glucan branching enzyme GlgB, found in Deinococcus radiodurans (strain ATCC 13939 / DSM 20539 / JCM 16871 / CCUG 27074 / LMG 4051 / NBRC 15346 / NCIMB 9279 / VKM B-1422 / R1).